Here is a 96-residue protein sequence, read N- to C-terminus: Putative translation initiation factor IF-1, chloroplastic (96 aa).

Residues 18–57 enclose the S1-like domain; that stretch reads INYVSGKIRHSFIRILPGDRVKIEVSPYDSTKGRIIYRLH.

Belongs to the IF-1 family. In terms of assembly, component of the 30S ribosomal translation pre-initiation complex which assembles on the 30S ribosome in the order IF-2 and IF-3, IF-1 and N-formylmethionyl-tRNA(fMet); mRNA recruitment can occur at any time during PIC assembly.

The protein resides in the plastid. It localises to the chloroplast. Functionally, one of the essential components for the initiation of protein synthesis. Stabilizes the binding of IF-2 and IF-3 on the 30S subunit to which N-formylmethionyl-tRNA(fMet) subsequently binds. Helps modulate mRNA selection, yielding the 30S pre-initiation complex (PIC). Upon addition of the 50S ribosomal subunit IF-1, IF-2 and IF-3 are released leaving the mature 70S translation initiation complex. This Nicotiana tabacum (Common tobacco) protein is Putative translation initiation factor IF-1, chloroplastic (infA).